We begin with the raw amino-acid sequence, 235 residues long: Probable transcriptional regulatory protein Ccon26_04940 (235 aa).

This sequence belongs to the TACO1 family.

It localises to the cytoplasm. In Campylobacter concisus (strain 13826), this protein is Probable transcriptional regulatory protein Ccon26_04940.